The sequence spans 129 residues: Large ribosomal subunit protein bL20 (129 aa).

This sequence belongs to the bacterial ribosomal protein bL20 family.

Binds directly to 23S ribosomal RNA and is necessary for the in vitro assembly process of the 50S ribosomal subunit. It is not involved in the protein synthesizing functions of that subunit. The protein is Large ribosomal subunit protein bL20 of Mycobacterium leprae (strain Br4923).